The sequence spans 754 residues: 5-methyltetrahydropteroyltriglutamate--homocysteine methyltransferase (754 aa).

5-methyltetrahydropteroyltri-L-glutamate is bound by residues 15 to 18 and Lys-114; that span reads RELK. Residues 430 to 432 and Glu-483 contribute to the L-homocysteine site; that span reads IGS. L-methionine is bound by residues 430-432 and Glu-483; that span reads IGS. 5-methyltetrahydropteroyltri-L-glutamate-binding positions include 514–515 and Trp-560; that span reads RC. Asp-598 is an L-homocysteine binding site. Position 598 (Asp-598) interacts with L-methionine. Glu-604 is a 5-methyltetrahydropteroyltri-L-glutamate binding site. Zn(2+)-binding residues include His-641, Cys-643, and Glu-665. His-694 serves as the catalytic Proton donor. Cys-726 contacts Zn(2+).

This sequence belongs to the vitamin-B12 independent methionine synthase family. Zn(2+) is required as a cofactor.

It carries out the reaction 5-methyltetrahydropteroyltri-L-glutamate + L-homocysteine = tetrahydropteroyltri-L-glutamate + L-methionine. It functions in the pathway amino-acid biosynthesis; L-methionine biosynthesis via de novo pathway; L-methionine from L-homocysteine (MetE route): step 1/1. Functionally, catalyzes the transfer of a methyl group from 5-methyltetrahydrofolate to homocysteine resulting in methionine formation. The polypeptide is 5-methyltetrahydropteroyltriglutamate--homocysteine methyltransferase (Campylobacter jejuni subsp. doylei (strain ATCC BAA-1458 / RM4099 / 269.97)).